The primary structure comprises 634 residues: Chaperone protein HtpG (634 aa).

The interval 1-344 is a; substrate-binding; the sequence is MNETVANNKE…SNDLPLNVSR (344 aa). A b region spans residues 345 to 561; that stretch reads EILQDNKVTQ…DFEMGTQMAK (217 aa). The segment at 562–634 is c; that stretch reads LLAAAGQAVP…TAINSLLTKG (73 aa).

It belongs to the heat shock protein 90 family. Homodimer.

It localises to the cytoplasm. Its function is as follows. Molecular chaperone. Has ATPase activity. This Vibrio vulnificus (strain YJ016) protein is Chaperone protein HtpG.